A 178-amino-acid chain; its full sequence is Bifunctional protein PyrR (178 aa).

A PRPP-binding motif is present at residues 99–111 (VIIVDDVLYTCRT).

This sequence belongs to the purine/pyrimidine phosphoribosyltransferase family. PyrR subfamily. Homodimer and homohexamer; in equilibrium.

It catalyses the reaction UMP + diphosphate = 5-phospho-alpha-D-ribose 1-diphosphate + uracil. Its function is as follows. Regulates transcriptional attenuation of the pyrimidine nucleotide (pyr) operon by binding in a uridine-dependent manner to specific sites on pyr mRNA. This disrupts an antiterminator hairpin in the RNA and favors formation of a downstream transcription terminator, leading to a reduced expression of downstream genes. Also displays a weak uracil phosphoribosyltransferase activity which is not physiologically significant. The chain is Bifunctional protein PyrR from Clostridium perfringens (strain ATCC 13124 / DSM 756 / JCM 1290 / NCIMB 6125 / NCTC 8237 / Type A).